A 637-amino-acid polypeptide reads, in one-letter code: MLKFQEAAKCVSGSTAISTYPKTLIARRYVLQQKLGSGSFGTVYLVSDKKAKRGEELKVLKEISVGELNPNETVQANLEAQLLSKLDHPAIVKFHASFVEQDNFCIITEYCEGRDLDYKIQEYKEAGKIFPDNQIIEWFIQLLLGVDYMHERRILHRDLKSKNIFLKNNLLKIGDFGVSRLLMGSCDLATTLTGTPHYMSPEALKHQGYDTKSDIWSLACILYEMCCMNHAFAGSNFLSIVLKIVEGDTPSLPERYPKELNTIMESMLNKNPSLRPSAIEILKIPYIDEQLQHLMCRHSEMTLEDKNLDCQKEAARLINAMQKRIHLQTLRALSEVQKMTPRERMRLRKLQAADERARKLKKIVEEKYEENSKRMQELRSRNFQQLSVDVLHEKTHLIGMEEKEEQPEGRPSCSPQDEDEERWQDREEEFDEPTLENLSEPQPIPSMDLRKLESIVEDATSDLGYHEIPEDPLVAEEYYADAFDSYCEESDEEEEEIVLAGPEKEIKNEGSQPTYRTNQQDSDIEALARCLENVLGCTSLDTKTIPSMAADVSPGPTIFNSVMARTKMKRMRESAMQKLGTEVFEEVYNYLKRARHQNASEAEIRERLEKVVPRASDCFEVDQLLYFEEQLLITMGK.

The 259-residue stretch at 29–287 folds into the Protein kinase domain; it reads YVLQQKLGSG…AIEILKIPYI (259 aa). Residues 35–43 and Lys-61 contribute to the ATP site; that span reads LGSGSFGTV. Asp-158 serves as the catalytic Proton acceptor. Ser-273 carries the phosphoserine; by CHEK1 modification. The stretch at 302–385 forms a coiled coil; sequence TLEDKNLDCQ…QELRSRNFQQ (84 aa). Residues 399–446 form a disordered region; that stretch reads GMEEKEEQPEGRPSCSPQDEDEERWQDREEEFDEPTLENLSEPQPIPS. Over residues 416–434 the composition is skewed to acidic residues; the sequence is QDEDEERWQDREEEFDEPT.

The protein belongs to the protein kinase superfamily. NEK Ser/Thr protein kinase family. NIMA subfamily. Interacts with NEK2. Mn(2+) serves as cofactor. Mg(2+) is required as a cofactor. In terms of processing, phosphorylated by NEK2. Phosphorylation at Ser-273 is important for its activation.

It localises to the nucleus. It is found in the nucleolus. It catalyses the reaction L-seryl-[protein] + ATP = O-phospho-L-seryl-[protein] + ADP + H(+). The catalysed reaction is L-threonyl-[protein] + ATP = O-phospho-L-threonyl-[protein] + ADP + H(+). With respect to regulation, autorepressed by intramolecular binding of the C-terminus which dissociates following phosphorylation by NEK2. Activated in response to DNA damage. Inhibited by zinc. In terms of biological role, protein kinase which plays an important role in the G2/M checkpoint response to DNA damage. Controls degradation of CDC25A by directly phosphorylating it on residues whose phosphorylation is required for BTRC-mediated polyubiquitination and degradation. The chain is Serine/threonine-protein kinase Nek11 (NEK11) from Macaca fascicularis (Crab-eating macaque).